The chain runs to 245 residues: 1-(5-phosphoribosyl)-5-[(5-phosphoribosylamino)methylideneamino] imidazole-4-carboxamide isomerase (245 aa).

Asp8 acts as the Proton acceptor in catalysis. Asp129 serves as the catalytic Proton donor.

The protein belongs to the HisA/HisF family.

It is found in the cytoplasm. The enzyme catalyses 1-(5-phospho-beta-D-ribosyl)-5-[(5-phospho-beta-D-ribosylamino)methylideneamino]imidazole-4-carboxamide = 5-[(5-phospho-1-deoxy-D-ribulos-1-ylimino)methylamino]-1-(5-phospho-beta-D-ribosyl)imidazole-4-carboxamide. Its pathway is amino-acid biosynthesis; L-histidine biosynthesis; L-histidine from 5-phospho-alpha-D-ribose 1-diphosphate: step 4/9. The protein is 1-(5-phosphoribosyl)-5-[(5-phosphoribosylamino)methylideneamino] imidazole-4-carboxamide isomerase of Rhodopseudomonas palustris (strain ATCC BAA-98 / CGA009).